A 216-amino-acid chain; its full sequence is MRDQEFWHNKWASNQIGFHLDDVNPLLPAFWQYTNPKREDTVLVPLCGKSEDLIWLATKHDEVQGVELSLIAVRAFFAEHFYTPTVTPVNGMHELYQFDELSIYTGDFFTAPVSKADIIYDRAALVALPKEMREEYANRVKQLLNPGGRILLVTLNYPQDEMSGPPFSVPVEEIEQLFEGYKVTCLNVDQADENHPKIAKKGLSRFSEEVYLIESK.

S-adenosyl-L-methionine contacts are provided by W11, L46, E67, and R122.

It belongs to the class I-like SAM-binding methyltransferase superfamily. TPMT family.

The protein resides in the cytoplasm. It carries out the reaction S-adenosyl-L-methionine + a thiopurine = S-adenosyl-L-homocysteine + a thiopurine S-methylether.. This is Thiopurine S-methyltransferase from Vibrio campbellii (strain ATCC BAA-1116).